Reading from the N-terminus, the 1360-residue chain is Lysine-specific demethylase REF6 (1360 aa).

A2 is modified (N-acetylalanine). Positions 20–61 (APEFRPTLAEFQDPIAYILKIEEEASRYGICKILPPLPPPSK) constitute a JmjN domain. The JmjC domain occupies 203–369 (ETAWNMRAMS…MAKDAAIRRA (167 aa)). 3 residues coordinate Fe cation: H246, E248, and H337. The segment at 652 to 698 (YGDSSDSEEEDQKGLVTPSSKGETKTYDQEGSDGHEEARDGRTSDFN) is disordered. The segment covering 673–694 (GETKTYDQEGSDGHEEARDGRT) has biased composition (basic and acidic residues). The Nuclear localization signal motif lies at 944–951 (CRKRKIRA). 4 disordered regions span residues 955 to 1012 (PRKK…DPHK), 1044 to 1081 (AASE…SQQT), 1133 to 1155 (TGKR…QSSR), and 1172 to 1238 (EELD…NEEE). Composition is skewed to polar residues over residues 994–1008 (ETGN…NQMS) and 1046–1057 (SESSMENGSQHS). Basic residues predominate over residues 1136–1147 (RQTRSTAKRIAK). A compositionally biased stretch (acidic residues) spans 1225–1238 (EKEEEEEEEENEEE). Residues 1243-1266 (YQCNMEGCTMSFSSEKQLMLHKRN) form a C2H2-type 1; degenerate zinc finger. Residues C1245, C1250, H1263, C1268, C1273, H1280, H1286, H1290, C1298, C1303, H1316, H1320, C1328, C1333, H1346, and H1352 each contribute to the Zn(2+) site. 3 C2H2-type zinc fingers span residues 1266–1290 (NICP…QRVH), 1296–1320 (LKCP…IRVH), and 1326–1352 (YVCA…KTGH). The interval 1275–1348 (KNFFSHKYLV…FVSDFSRHKR (74 aa)) is DNA-binding.

This sequence belongs to the JHDM3 histone demethylase family. As to quaternary structure, forms homooligomers. Interacts with BZR2 (via N-terminus). Interacts with BRM in the SWI/SNF complex. Interacts (via N-terminus) with NFYC9. Associates with INO80. In terms of tissue distribution, highly expressed in the shoot apical meristem and primary and secondary root tips, and lower expression in cotyledons, leaves and root axis along vascular tissues. Detected in inflorescences, stems and siliques. Present in seeds.

The protein resides in the nucleus. It catalyses the reaction N(6),N(6),N(6)-trimethyl-L-lysyl(27)-[histone H3] + 2-oxoglutarate + O2 = N(6),N(6)-dimethyl-L-lysyl(27)-[histone H3] + formaldehyde + succinate + CO2. It carries out the reaction N(6),N(6)-dimethyl-L-lysyl(27)-[histone H3] + 2-oxoglutarate + O2 = N(6)-methyl-L-lysyl(27)-[histone H3] + formaldehyde + succinate + CO2. Its function is as follows. Histone demethylase that demethylates 'Lys-27' (H3K27me) of histone H3, thus acting as a positive regulator of gene expression. Demethylates both tri- (H3K27me3) and di-methylated (H3K27me2) H3K27me. Also demethylates H3K4me3/2 and H3K36me3/2 in an in vitro assay. Involved in the transcriptional regulation of hundreds of genes regulating developmental patterning and responses to various stimuli. Binds DNA via its four zinc fingers in a sequence-specific manner, 5'-CTCTG(C/T)T(C/T)-3' (5'-CTCTGYTY-3'), with a preference for hypo-methylated status (e.g. cytosine methylation), to promote the demethylation of H3K27me3 and recruit the chromatin remodeler BRM in order to activate gene expression. Participates in the regulation of organ boundary formation. Bind mostly motifs located in active chromatin states which are depleted for heterochromatic modifications. Involved in the regulation of flowering time by repressing FLOWERING LOCUS C (FLC) expression. Stimulates lateral roots formation (e.g. primordium initiation and emergence) via the epigenetic de-repression of PIN genes such as PIN1, PIN3 and PIN7 directly by modulating the methylation status of their loci. Interacts with the NF-Y complex to regulate SOC1. Mediates the recruitment of BRM to its target loci. Together with EEN, involved in the epigenetic chromatin-dependent regulatory mechanism that monitors the expression of the essential multifunctional plant stress regulator EIN2 via H3K27me3 repressive histone demethylation and histone variant H2A.Z eviction, thus modulating responses to ethylene (ET), especially during embryogenesis. Eluviates seed dormancy by triggering abscisic acid (ABA) catabolism in seeds via the induction of CYP707A1 and CYP707A3 expression, genes involved in ABA degradation; binds directly to CYP707A1 and CYP707A3 loci to reduce their H3K27me3 levels in developing siliques. Required for systemic acquired resistance (SAR) toward pathogenic bacteria (e.g. Pseudomonas syringae pv tomato DC3000 (avrPto)). Together with FLD and MSI4/FVE, contributes to dehydroabietinal-dependent (DA, a diterpenoid tricyclic diterpene) activation of flowering ans SAR. Binds to the HSFA2 chromatin region to alleviate H3K27me3 repressive marks and trigger its expression in response to heat in a BRM-dependent manner. Involved in the mechanisms necessary for quick response to heat and subsequent heritable transgenerational memory of heat acclimation (global warming) such as early flowering and attenuated immunity; this process includes epigenetic regulation as well as post-transcriptional gene silencing (PTGS). In response to heat, HSFA2 is activated and promotes the expression of REF6 which in turn derepresses HSFA2, thus establishing a heritable feedback loop able to trigger SGIP1 and subsequent SGIP1-mediated SGS3 degradation; this prevents the biosynthesis of trans-acting siRNA (tasiRNA) and leads to the release of HTT5, which drives early flowering but attenuates immunity. In terms of biological role, involved in the maintenance of H3K27me1 histone marks on euchromatin in a PRC2-dependent manner, to maintain low-level basal expression of corresponding genes. Together with ELF6, required for H3K27me3 resetting (especially in constitutive heterochromatin within the pericentromeric regions) and transgenerational inheritance of histone marks, thus acting in safeguarding genome and epigenome integrity during sexual reproduction. In Arabidopsis thaliana (Mouse-ear cress), this protein is Lysine-specific demethylase REF6.